The primary structure comprises 289 residues: Rhodopsin (289 aa).

Residues 1 to 7 lie on the Extracellular side of the membrane; it reads YLVNPAG. Residues 8-32 form a helical membrane-spanning segment; the sequence is YAALGAYMFLLILIGFPVNFLTLYV. The Cytoplasmic portion of the chain corresponds to 33 to 44; the sequence is TLEHKKLRTPLN. A helical membrane pass occupies residues 45-67; that stretch reads YILLNLAVADLFMVLGGFTTTMY. At 68–81 the chain is on the extracellular side; that stretch reads TSMHGYFVLGRLGC. An intrachain disulfide couples C81 to C158. Residues 82 to 104 traverse the membrane as a helical segment; sequence NLEGFFATLGGEIALWSLVVLAI. The 'Ionic lock' involved in activated form stabilization signature appears at 105–107; sequence ERW. The Cytoplasmic segment spans residues 105 to 123; it reads ERWIVGLKPIRNFRFTEDH. The helical transmembrane segment at 124-144 threads the bilayer; that stretch reads AIMGLAFSWVMALSCAVPPLA. Topologically, residues 145–173 are extracellular; the sequence is GWLRYIPEGIQGSCGVDYYTRAEGFNNES. The N-linked (GlcNAc...) asparagine glycan is linked to N171. The helical transmembrane segment at 174 to 195 threads the bilayer; it reads FVIYMFTVHFLIPLSVIFFCYG. Over 196-223 the chain is Cytoplasmic; the sequence is RLLCAVKEAAAAQQESETTQRAEKEVSR. A helical transmembrane segment spans residues 224–245; sequence MVVIMVIGFLVCWLPYASVAWW. At 246–257 the chain is on the extracellular side; that stretch reads IFCNQGSDFGPI. Residues 258 to 279 traverse the membrane as a helical segment; that stretch reads FMTLPSFFAKRPAIYNPMIYIC. An N6-(retinylidene)lysine modification is found at K267. Topologically, residues 280–289 are cytoplasmic; it reads MNKQFRHCMI.

It belongs to the G-protein coupled receptor 1 family. Opsin subfamily. In terms of processing, phosphorylated on some or all of the serine and threonine residues present in the C-terminal region. Contains one covalently linked retinal chromophore.

Its subcellular location is the membrane. It is found in the cell projection. The protein resides in the cilium. The protein localises to the photoreceptor outer segment. Functionally, photoreceptor required for image-forming vision at low light intensity. While most salt water fish species use retinal as chromophore, most freshwater fish use 3-dehydroretinal, or a mixture of retinal and 3-dehydroretinal. Light-induced isomerization of 11-cis to all-trans retinal triggers a conformational change that activates signaling via G-proteins. Subsequent receptor phosphorylation mediates displacement of the bound G-protein alpha subunit by arrestin and terminates signaling. This Limnocottus pallidus (Ray-finned fish) protein is Rhodopsin (rho).